Here is a 64-residue protein sequence, read N- to C-terminus: Large ribosomal subunit protein bL35 (64 aa).

The disordered stretch occupies residues 20 to 42; that stretch reads GRVKREKMYGSHNLEKKNRKRTR. Residues 25–35 show a composition bias toward basic and acidic residues; sequence EKMYGSHNLEK.

Belongs to the bacterial ribosomal protein bL35 family.

The sequence is that of Large ribosomal subunit protein bL35 from Chlorobium phaeobacteroides (strain BS1).